Reading from the N-terminus, the 432-residue chain is Succinate--CoA ligase [GDP-forming] subunit beta, mitochondrial (432 aa).

A mitochondrion-targeting transit peptide spans 1–37; sequence MAAPVGAQARKLLRDLVLRPPLLAARSQVVQLTSRRW. Positions 46-274 constitute an ATP-grasp domain; sequence KKLMSDNGVK…NAEFRQKDIF (229 aa). Q57 is a binding site for GTP. Position 73 is an N6-acetyllysine (K73). K78 carries the post-translational modification N6-succinyllysine. 90 to 92 serves as a coordination point for GTP; sequence GRG. 3 positions are modified to N6-acetyllysine: K111, K132, and K139. L146 contributes to the GTP binding site. At S161 the chain carries Phosphoserine. N6-acetyllysine occurs at positions 200, 218, and 227. The Mg(2+) site is built by N243 and D257. K271 carries the N6-acetyllysine modification. Substrate is bound at residue N308. K338 bears the N6-succinyllysine mark. Residue K347 is modified to N6-acetyllysine. Position 365 to 367 (365 to 367) interacts with substrate; sequence GIV. N6-acetyllysine occurs at positions 386 and 423.

The protein belongs to the succinate/malate CoA ligase beta subunit family. GTP-specific subunit beta subfamily. In terms of assembly, heterodimer of an alpha and a beta subunit. The beta subunit determines specificity for GTP. Mg(2+) is required as a cofactor.

It localises to the mitochondrion. The catalysed reaction is GTP + succinate + CoA = succinyl-CoA + GDP + phosphate. The protein operates within carbohydrate metabolism; tricarboxylic acid cycle; succinate from succinyl-CoA (ligase route): step 1/1. Functionally, GTP-specific succinyl-CoA synthetase functions in the citric acid cycle (TCA), coupling the hydrolysis of succinyl-CoA to the synthesis of GTP and thus represents the only step of substrate-level phosphorylation in the TCA. The beta subunit provides nucleotide specificity of the enzyme and binds the substrate succinate, while the binding sites for coenzyme A and phosphate are found in the alpha subunit. This is Succinate--CoA ligase [GDP-forming] subunit beta, mitochondrial from Bos taurus (Bovine).